A 179-amino-acid chain; its full sequence is Large ribosomal subunit protein uL6 (179 aa).

This sequence belongs to the universal ribosomal protein uL6 family. In terms of assembly, part of the 50S ribosomal subunit.

This protein binds to the 23S rRNA, and is important in its secondary structure. It is located near the subunit interface in the base of the L7/L12 stalk, and near the tRNA binding site of the peptidyltransferase center. This chain is Large ribosomal subunit protein uL6, found in Alkaliphilus metalliredigens (strain QYMF).